The following is a 60-amino-acid chain: Large ribosomal subunit protein bL32 (60 aa).

Belongs to the bacterial ribosomal protein bL32 family.

The polypeptide is Large ribosomal subunit protein bL32 (Azotobacter vinelandii (strain DJ / ATCC BAA-1303)).